Reading from the N-terminus, the 281-residue chain is Nucleotide-binding protein Patl_0571 (281 aa).

An ATP-binding site is contributed by 8 to 15 (GRSGSGKS). GTP is bound at residue 56–59 (DVRN).

It belongs to the RapZ-like family.

In terms of biological role, displays ATPase and GTPase activities. This chain is Nucleotide-binding protein Patl_0571, found in Pseudoalteromonas atlantica (strain T6c / ATCC BAA-1087).